The sequence spans 431 residues: Histidinol dehydrogenase (431 aa).

NAD(+) is bound by residues Tyr130, Gln191, and Asn214. 3 residues coordinate substrate: Ser237, Gln259, and His262. 2 residues coordinate Zn(2+): Gln259 and His262. Residues Glu327 and His328 each act as proton acceptor in the active site. Substrate-binding residues include His328, Asp361, Glu415, and His420. Zn(2+) is bound at residue Asp361. His420 contributes to the Zn(2+) binding site.

The protein belongs to the histidinol dehydrogenase family. The cofactor is Zn(2+).

The enzyme catalyses L-histidinol + 2 NAD(+) + H2O = L-histidine + 2 NADH + 3 H(+). It functions in the pathway amino-acid biosynthesis; L-histidine biosynthesis; L-histidine from 5-phospho-alpha-D-ribose 1-diphosphate: step 9/9. In terms of biological role, catalyzes the sequential NAD-dependent oxidations of L-histidinol to L-histidinaldehyde and then to L-histidine. The sequence is that of Histidinol dehydrogenase from Rhodopseudomonas palustris (strain ATCC BAA-98 / CGA009).